A 73-amino-acid chain; its full sequence is Small ribosomal subunit protein bS18 (73 aa).

This sequence belongs to the bacterial ribosomal protein bS18 family. Part of the 30S ribosomal subunit. Forms a tight heterodimer with protein bS6.

Functionally, binds as a heterodimer with protein bS6 to the central domain of the 16S rRNA, where it helps stabilize the platform of the 30S subunit. This Synechococcus sp. (strain WH7803) protein is Small ribosomal subunit protein bS18.